We begin with the raw amino-acid sequence, 130 residues long: Small ribosomal subunit protein uS8 (130 aa).

This sequence belongs to the universal ribosomal protein uS8 family. As to quaternary structure, part of the 30S ribosomal subunit. Contacts proteins S5 and S12.

Its function is as follows. One of the primary rRNA binding proteins, it binds directly to 16S rRNA central domain where it helps coordinate assembly of the platform of the 30S subunit. The protein is Small ribosomal subunit protein uS8 of Photobacterium profundum (strain SS9).